Reading from the N-terminus, the 234-residue chain is MEKFFSPSRHNYADLSPTDVPASEESDEALEEKQFEYFQQRQHRRLVLVNRLLAASTVALVMVSLWLGWELHTAKFGSMGSFPYGFKYELEAAKKVIKLEEYKFLGSPIFLDDGTELVPEPTPGPMKTLGVTDMYVGEPSKELDWNWNQLHWDHCLNHLRQMILCQGDLTPIPSKYYRGITDNYIFGDMPHTCRNWDSVREFITDRFNGSSAVPLAPGTVLSDPYKKLLGILDE.

The disordered stretch occupies residues M1–S26. A helical membrane pass occupies residues V47 to W69. Positions H151–C155 match the HXXHC 1 motif. N208 carries an N-linked (GlcNAc...) asparagine glycan.

The protein belongs to the ustYa family.

The protein localises to the membrane. It participates in mycotoxin biosynthesis. UstYa family oxidase; part of the gene cluster that mediates the biosynthesis of the phomopsins, a group of hexapeptide mycotoxins which infects lupins and causes lupinosis disease in livestock. Within the pathway, phomYd' catalyzes the desaturation of the Asp moiety into 2,3-dehydroaspartic acid (dAsp). The pathway starts with the processing of the precursor phomA' by several endopeptidases including kexin proteases as well as the cluster-specific S41 family peptidase phomP1 and the oligopeptidase phomG' to produce 10 identical copies of the hexapeptide Tyr-Val-Ile-Pro-Ile-Asp. After being excised from the precursor peptide, the core peptides are cyclized and modified post-translationally by enzymes encoded within the gene cluster. The timing and order of proteolysis of the phomA' precursor and PTMs are still unknown. Two tyrosinase-like enzymes, phomQ1' and phomQ2, catalyze the chlorination and hydroxylation of Tyr, respectively. PhomYb, is proposed to be involved in the construction of the macrocyclic structure. The other 4 ustYa family proteins may be involved in PTMs that generate the unique structure of phomopsin A. PhomYa' is required for the hydroxylation of C-beta of Tyr. PhomYc', phomYd', and phomYe are responsible for the biosynthesis of 2,3-dehydroisoleucine (dIle), 2,3-dehydroaspartic acid (dAsp), and 3,4-dehydroproline (dPro), respectively. While dIle formation by phomYc' is indispensable for the installation of dAsp by phomYd', the order of the other PTMs have not been elucidated yet. Most of the biosynthetic enzymes likely have broad substrate specificity, and thus, there might be a metabolic grid from a precursor to phomopsin A. The enzyme(s) responsible for the biosynthesis of 3,4-dehydrovaline (dVal) have also not been identified yet. Finally, phomM' acts as an S-adenosylmethionine-dependent alpha-N-methyltransferase that catalyzes two successive N-methylation reactions, converting N-desmethyl-phomopsin A to phomopsin A and phomopsin A further to an N,N-dimethylated congener called phomopsin E. This chain is UstYa family oxidase phomYd', found in Diaporthe leptostromiformis (Lupinosis disease fungus).